We begin with the raw amino-acid sequence, 154 residues long: MSTRNSRSELEKTAVQLFRKLGTRTVLFHQAAAQALGLFPTDLKSADILNEAGPMTAGELGKKTGLSTGSVTALVDRLEKAGYVAREKDPNDRRRVVIVPLTASKKHIKDLFRPLSESTMDLCREYTEEELELIFSFVGKAADIMEEELERLKQ.

Residues R7 to D143 enclose the HTH marR-type domain. The H-T-H motif DNA-binding region spans A57–K80.

This is an uncharacterized protein from Bacillus subtilis (strain 168).